The primary structure comprises 373 residues: Probable protein phosphatase 2C 73 (373 aa).

Positions 61 to 354 (LASLFSKRGE…DDMSVVCLFL (294 aa)) constitute a PPM-type phosphatase domain. Mn(2+)-binding residues include Asp97, Gly98, Asp299, and Asp345.

It belongs to the PP2C family. Requires Mg(2+) as cofactor. Mn(2+) is required as a cofactor.

The enzyme catalyses O-phospho-L-seryl-[protein] + H2O = L-seryl-[protein] + phosphate. It carries out the reaction O-phospho-L-threonyl-[protein] + H2O = L-threonyl-[protein] + phosphate. The protein is Probable protein phosphatase 2C 73 (PPC6-7) of Arabidopsis thaliana (Mouse-ear cress).